Consider the following 112-residue polypeptide: MSSVKFLQNLKRINEEDLRNLMEKGETFVLYVRSERLYDKVKEIFDVDVVFPELAKSFEGIPFYWGDADELKELNVIPPSVLIFKEGKPVEFLQGIKTWAEYTRKLKESLLC.

This is an uncharacterized protein from Aquifex aeolicus (strain VF5).